Consider the following 434-residue polypeptide: Alpha-enolase (434 aa).

A Mg(2+)-binding site is contributed by S40. The substrate site is built by H158 and E167. E210 acts as the Proton donor in catalysis. The Mg(2+) site is built by D245, E293, and D318. Substrate-binding positions include E293, D318, 370 to 373 (SHRS), and K394.

This sequence belongs to the enolase family. Homodimer. Requires Mg(2+) as cofactor.

It is found in the cytoplasm. The catalysed reaction is (2R)-2-phosphoglycerate = phosphoenolpyruvate + H2O. It participates in carbohydrate degradation; glycolysis; pyruvate from D-glyceraldehyde 3-phosphate: step 4/5. This is Alpha-enolase from Trachemys scripta elegans (Red-eared slider turtle).